The chain runs to 246 residues: MTVLMSPDELEAALRAVGAARYHNRHPFHQLLHGGKLDKRQVQAWALNRYCYQAAIPIKDATLIARTDDSELRRIWRQRLVDHDGTQPGEGGIVRWLALAEGLGLDRDMVISERRALPATRFAVRAYVDFVRDRSLLEAVASSLTEMFSPTIISERVSGMLANYDFITRETLAYFNARLDQAPRDADFALDYVKRHARTPEQQQAAIAALTFKCDVLWAQLDALHHAYVSPGLIPPGAFGHDGIWS.

It belongs to the PqqC family.

The enzyme catalyses 6-(2-amino-2-carboxyethyl)-7,8-dioxo-1,2,3,4,7,8-hexahydroquinoline-2,4-dicarboxylate + 3 O2 = pyrroloquinoline quinone + 2 H2O2 + 2 H2O + H(+). It participates in cofactor biosynthesis; pyrroloquinoline quinone biosynthesis. Its function is as follows. Ring cyclization and eight-electron oxidation of 3a-(2-amino-2-carboxyethyl)-4,5-dioxo-4,5,6,7,8,9-hexahydroquinoline-7,9-dicarboxylic-acid to PQQ. This Acidiphilium cryptum (strain JF-5) protein is Pyrroloquinoline-quinone synthase.